Consider the following 137-residue polypeptide: Large ribosomal subunit protein uL16 (137 aa).

A compositionally biased stretch (basic residues) spans methionine 1 to glycine 19. Residues methionine 1–threonine 20 form a disordered region.

The protein belongs to the universal ribosomal protein uL16 family. Part of the 50S ribosomal subunit.

Binds 23S rRNA and is also seen to make contacts with the A and possibly P site tRNAs. This is Large ribosomal subunit protein uL16 from Desulfosudis oleivorans (strain DSM 6200 / JCM 39069 / Hxd3) (Desulfococcus oleovorans).